The sequence spans 743 residues: Probable TonB-dependent siderophore receptor PiuA (743 aa).

The first 28 residues, Met-1–Ala-28, serve as a signal peptide directing secretion. One can recognise a TBDR plug domain in the interval Pro-61–Lys-167. One can recognise a TBDR beta-barrel domain in the interval Gly-172 to Tyr-743. Disulfide bonds link Cys-408–Cys-416 and Cys-627–Cys-632.

Belongs to the TonB-dependent receptor family.

Its subcellular location is the cell outer membrane. Functionally, probably involved in the initial step of iron uptake by binding iron chelating siderophores, thereby allowing extraction of iron from the environment. May bind the siderophore, ferric enterobactin, with micromolar affinity. The chain is Probable TonB-dependent siderophore receptor PiuA from Acinetobacter baumannii (strain ATCC 19606 / DSM 30007 / JCM 6841 / CCUG 19606 / CIP 70.34 / NBRC 109757 / NCIMB 12457 / NCTC 12156 / 81).